Reading from the N-terminus, the 340-residue chain is Cytochrome c oxidase subunit 1 (340 aa).

A helical transmembrane segment spans residues 18–38 (MCYLLVAILCGFLGYIYSLFI). The Ca(2+) site is built by Glu41 and Gly46. Residues 42–62 (LSIIGCGVLFGDYQYYNVLVT) form a helical membrane-spanning segment. A Fe(II)-heme a-binding site is contributed by His64. 7 helical membrane passes run 66-86 (LVMV…NYFV), 100-120 (LNNM…SGLL), 148-168 (FTVF…INLL), 186-206 (LFIW…PVLA), 237-257 (LFWF…FGLI), 279-299 (MILI…VVGM), and 305-325 (AYFG…LFNW). Position 243 (His243) interacts with Cu cation. Residues 243 to 247 (HPEVY) constitute a cross-link (1'-histidyl-3'-tyrosine (His-Tyr)). Tyr247 contacts O2. His292 and His293 together coordinate Cu cation.

It belongs to the heme-copper respiratory oxidase family. Component of the cytochrome c oxidase (complex IV, CIV), a multisubunit enzyme composed of a catalytic core of 3 subunits and several supernumerary subunits. The complex exists as a monomer or a dimer and forms supercomplexes (SCs) in the inner mitochondrial membrane with ubiquinol-cytochrome c oxidoreductase (cytochrome b-c1 complex, complex III, CIII). The cofactor is heme. Requires Cu cation as cofactor.

It is found in the mitochondrion inner membrane. The catalysed reaction is 4 Fe(II)-[cytochrome c] + O2 + 8 H(+)(in) = 4 Fe(III)-[cytochrome c] + 2 H2O + 4 H(+)(out). The protein operates within energy metabolism; oxidative phosphorylation. In terms of biological role, component of the cytochrome c oxidase, the last enzyme in the mitochondrial electron transport chain which drives oxidative phosphorylation. The respiratory chain contains 3 multisubunit complexes succinate dehydrogenase (complex II, CII), ubiquinol-cytochrome c oxidoreductase (cytochrome b-c1 complex, complex III, CIII) and cytochrome c oxidase (complex IV, CIV), that cooperate to transfer electrons derived from NADH and succinate to molecular oxygen, creating an electrochemical gradient over the inner membrane that drives transmembrane transport and the ATP synthase. Cytochrome c oxidase is the component of the respiratory chain that catalyzes the reduction of oxygen to water. Electrons originating from reduced cytochrome c in the intermembrane space (IMS) are transferred via the dinuclear copper A center (CU(A)) of subunit 2 and heme A of subunit 1 to the active site in subunit 1, a binuclear center (BNC) formed by heme A3 and copper B (CU(B)). The BNC reduces molecular oxygen to 2 water molecules using 4 electrons from cytochrome c in the IMS and 4 protons from the mitochondrial matrix. The protein is Cytochrome c oxidase subunit 1 (COI) of Strigomonas oncopelti (Parasitic flagellate).